The sequence spans 443 residues: Elongation factor 1-alpha (443 aa).

In terms of domain architecture, tr-type G spans 5-228; the sequence is KTHINLVVIG…DTMQPPKRPY (224 aa). The segment at 14–21 is G1; it reads GHVDSGKS. 14–21 contributes to the GTP binding site; the sequence is GHVDSGKS. The segment at 70-74 is G2; sequence GITID. The interval 91–94 is G3; that stretch reads DAPG. Residues 91 to 95 and 153 to 156 contribute to the GTP site; these read DAPGH and NKMD. The interval 153-156 is G4; sequence NKMD. Residues 192–194 form a G5 region; the sequence is SGF.

This sequence belongs to the TRAFAC class translation factor GTPase superfamily. Classic translation factor GTPase family. EF-Tu/EF-1A subfamily.

It localises to the cytoplasm. In terms of biological role, this protein promotes the GTP-dependent binding of aminoacyl-tRNA to the A-site of ribosomes during protein biosynthesis. The polypeptide is Elongation factor 1-alpha (MEF-1) (Plasmodium falciparum (isolate K1 / Thailand)).